A 154-amino-acid polypeptide reads, in one-letter code: Xanthine-guanine phosphoribosyltransferase (154 aa).

Residues 37–38 (RG), R69, and 88–96 (EDLVDSGDT) contribute to the 5-phospho-alpha-D-ribose 1-diphosphate site. R69 contributes to the GMP binding site. D89 contacts Mg(2+). Guanine contacts are provided by D92 and I135. Residues D92 and I135 each coordinate xanthine. GMP contacts are provided by residues 92-96 (DSGDT) and 134-135 (WI).

It belongs to the purine/pyrimidine phosphoribosyltransferase family. XGPT subfamily. In terms of assembly, homotetramer. Mg(2+) serves as cofactor.

It is found in the cell inner membrane. The catalysed reaction is GMP + diphosphate = guanine + 5-phospho-alpha-D-ribose 1-diphosphate. The enzyme catalyses XMP + diphosphate = xanthine + 5-phospho-alpha-D-ribose 1-diphosphate. It carries out the reaction IMP + diphosphate = hypoxanthine + 5-phospho-alpha-D-ribose 1-diphosphate. It functions in the pathway purine metabolism; GMP biosynthesis via salvage pathway; GMP from guanine: step 1/1. It participates in purine metabolism; XMP biosynthesis via salvage pathway; XMP from xanthine: step 1/1. Its function is as follows. Purine salvage pathway enzyme that catalyzes the transfer of the ribosyl-5-phosphate group from 5-phospho-alpha-D-ribose 1-diphosphate (PRPP) to the N9 position of the 6-oxopurines guanine and xanthine to form the corresponding ribonucleotides GMP (guanosine 5'-monophosphate) and XMP (xanthosine 5'-monophosphate), with the release of PPi. To a lesser extent, also acts on hypoxanthine. The chain is Xanthine-guanine phosphoribosyltransferase from Vibrio vulnificus (strain CMCP6).